Reading from the N-terminus, the 252-residue chain is Carboxy-S-adenosyl-L-methionine synthase (252 aa).

S-adenosyl-L-methionine is bound by residues Tyr45, 70-72 (GCS), 95-96 (DN), 123-124 (DI), Asn138, and Arg205.

It belongs to the class I-like SAM-binding methyltransferase superfamily. Cx-SAM synthase family. In terms of assembly, homodimer.

It catalyses the reaction prephenate + S-adenosyl-L-methionine = carboxy-S-adenosyl-L-methionine + 3-phenylpyruvate + H2O. Its function is as follows. Catalyzes the conversion of S-adenosyl-L-methionine (SAM) to carboxy-S-adenosyl-L-methionine (Cx-SAM). The polypeptide is Carboxy-S-adenosyl-L-methionine synthase (Photorhabdus laumondii subsp. laumondii (strain DSM 15139 / CIP 105565 / TT01) (Photorhabdus luminescens subsp. laumondii)).